Consider the following 215-residue polypeptide: Holliday junction branch migration complex subunit RuvA (215 aa).

A domain I region spans residues 1–67; it reads MIGWLQGERI…DDGSTLFGFC (67 aa). The tract at residues 68–146 is domain II; it reads DQQERDLFRT…NWAPLQEPSL (79 aa). The flexible linker stretch occupies residues 147–158; that stretch reads SLVDRSDVKAIP. The domain III stretch occupies residues 159-215; that stretch reads LGEPCLRDLQITLETLGYEDLEIRRAMRAVASGPDVPAEDDGDAWLRASLKWLSQSA.

Belongs to the RuvA family. In terms of assembly, homotetramer. Forms an RuvA(8)-RuvB(12)-Holliday junction (HJ) complex. HJ DNA is sandwiched between 2 RuvA tetramers; dsDNA enters through RuvA and exits via RuvB. An RuvB hexamer assembles on each DNA strand where it exits the tetramer. Each RuvB hexamer is contacted by two RuvA subunits (via domain III) on 2 adjacent RuvB subunits; this complex drives branch migration. In the full resolvosome a probable DNA-RuvA(4)-RuvB(12)-RuvC(2) complex forms which resolves the HJ.

The protein resides in the cytoplasm. The RuvA-RuvB-RuvC complex processes Holliday junction (HJ) DNA during genetic recombination and DNA repair, while the RuvA-RuvB complex plays an important role in the rescue of blocked DNA replication forks via replication fork reversal (RFR). RuvA specifically binds to HJ cruciform DNA, conferring on it an open structure. The RuvB hexamer acts as an ATP-dependent pump, pulling dsDNA into and through the RuvAB complex. HJ branch migration allows RuvC to scan DNA until it finds its consensus sequence, where it cleaves and resolves the cruciform DNA. This Synechococcus sp. (strain WH7803) protein is Holliday junction branch migration complex subunit RuvA.